Reading from the N-terminus, the 292-residue chain is Probable E3 ubiquitin-protein ligase RNF144A (292 aa).

The segment at Pro-16–Leu-236 is TRIAD supradomain. 14 residues coordinate Zn(2+): Cys-20, Cys-23, Cys-43, Cys-46, Cys-111, Cys-116, Cys-135, Cys-138, Cys-143, Cys-146, His-151, Cys-156, Cys-185, and Cys-188. The segment at Cys-20–Cys-70 adopts an RING-type 1 zinc-finger fold. An IBR-type zinc finger spans residues Gln-91–Cys-156. The segment at Cys-185–Cys-214 adopts an RING-type 2; atypical zinc-finger fold. Cys-198 is a catalytic residue. The Zn(2+) site is built by Cys-203, Cys-206, Cys-211, Cys-214, His-226, and Cys-232. A helical membrane pass occupies residues Val-250–Leu-270.

The protein belongs to the RBR family. RNF144 subfamily.

The protein resides in the membrane. The catalysed reaction is [E2 ubiquitin-conjugating enzyme]-S-ubiquitinyl-L-cysteine + [acceptor protein]-L-lysine = [E2 ubiquitin-conjugating enzyme]-L-cysteine + [acceptor protein]-N(6)-ubiquitinyl-L-lysine.. It functions in the pathway protein modification; protein ubiquitination. In terms of biological role, E3 ubiquitin-protein ligase which accepts ubiquitin from E2 ubiquitin-conjugating enzymes ube2l3 and ube2l6 in the form of a thioester and then directly transfers the ubiquitin to targeted substrates. The protein is Probable E3 ubiquitin-protein ligase RNF144A (rnf144a) of Xenopus tropicalis (Western clawed frog).